We begin with the raw amino-acid sequence, 81 residues long: MVKIRLKRMGAKKAPFYRIVVADSRSPRDGKFIEELGYYNPTTEPVTFKVDADKVNAWMKNGAQPSETVKKLLDKSGVTTK.

The protein belongs to the bacterial ribosomal protein bS16 family.

This is Small ribosomal subunit protein bS16 from Clostridium acetobutylicum (strain ATCC 824 / DSM 792 / JCM 1419 / IAM 19013 / LMG 5710 / NBRC 13948 / NRRL B-527 / VKM B-1787 / 2291 / W).